Here is a 545-residue protein sequence, read N- to C-terminus: Membrane protein insertase YidC (545 aa).

Residues 8 to 28 (ILLATVLSVGILILWQVIFPK) traverse the membrane as a helical segment. Residues 31 to 69 (PPKPAPTPAAEVAKPAAPAAPAPGAAAPAVPAPPPDAPE) are disordered. The segment covering 38–59 (PAAEVAKPAAPAAPAPGAAAPA) has biased composition (low complexity). 5 consecutive transmembrane segments (helical) span residues 325–345 (IDYGAVAKFFALFARGLLYVM), 355–375 (WGVAIILLTVLVRLVLFPLTY), 421–441 (LGGCLPMLLQMPVWFALYAAL), 458–478 (LTAHDPYFILPIAMGISSFVM), and 497–517 (FFPGFFTVIMLFVPGGLTLYI).

It belongs to the OXA1/ALB3/YidC family. Type 1 subfamily. Interacts with the Sec translocase complex via SecD. Specifically interacts with transmembrane segments of nascent integral membrane proteins during membrane integration.

It localises to the cell inner membrane. Required for the insertion and/or proper folding and/or complex formation of integral membrane proteins into the membrane. Involved in integration of membrane proteins that insert both dependently and independently of the Sec translocase complex, as well as at least some lipoproteins. Aids folding of multispanning membrane proteins. This Anaeromyxobacter dehalogenans (strain 2CP-C) protein is Membrane protein insertase YidC.